A 217-amino-acid chain; its full sequence is MNLVTRPGRVGIMGGTFDPIHYGHLVTAEAARWEFALQKVIFVPSGRPPHKKDYPVTDAEYRYQMTLLATASNPYFEVSRSEIDREGFSYTVDTVAEFRREYGPEVQLYFITGADAILEILTWKDVDTLLRECHFIAATRPGFQLNRLEESRPQLPVEGRHRIHLIEVPALAISSTDIRWRVKNNKPIKYLLPEAVEEYIRSRGLYRPRLDGVYEKG.

This sequence belongs to the NadD family.

It catalyses the reaction nicotinate beta-D-ribonucleotide + ATP + H(+) = deamido-NAD(+) + diphosphate. The protein operates within cofactor biosynthesis; NAD(+) biosynthesis; deamido-NAD(+) from nicotinate D-ribonucleotide: step 1/1. Catalyzes the reversible adenylation of nicotinate mononucleotide (NaMN) to nicotinic acid adenine dinucleotide (NaAD). The protein is Probable nicotinate-nucleotide adenylyltransferase of Moorella thermoacetica (strain ATCC 39073 / JCM 9320).